A 652-amino-acid polypeptide reads, in one-letter code: RNA-binding E3 ubiquitin-protein ligase MEX3C (652 aa).

Disordered regions lie at residues Ala-15–Gly-39 and Gln-80–Pro-136. Residues Ala-18–Gly-33 are compositionally biased toward pro residues. Residues Ala-101 to Asp-134 are compositionally biased toward acidic residues. KH domains are found at residues Thr-225 to Ile-286 and Gln-319 to Ile-380. 2 disordered regions span residues Ala-429–Thr-448 and Phe-506–Leu-566. Low complexity predominate over residues Arg-430–Thr-448. The segment covering Pro-519–Leu-537 has biased composition (polar residues). Residues Ser-530 and Ser-538 each carry the phosphoserine modification. Residues Ser-544 to Ser-555 show a composition bias toward basic and acidic residues. Residues Cys-601–Gln-641 form an RING-type zinc finger.

As to quaternary structure, interacts with USP7, which antagonizes the ability to degrade mRNA. Phosphorylated.

It is found in the nucleus. It localises to the cytoplasm. The enzyme catalyses S-ubiquitinyl-[E2 ubiquitin-conjugating enzyme]-L-cysteine + [acceptor protein]-L-lysine = [E2 ubiquitin-conjugating enzyme]-L-cysteine + N(6)-ubiquitinyl-[acceptor protein]-L-lysine.. In terms of biological role, RNA-binding protein. May be involved in post-transcriptional regulatory mechanisms, modulating levels of some mRNAs by promoting their degradation in a way involving ubiquitin ligase activity. May act as suppressor of replication stress and chromosome missegregation. The protein is RNA-binding E3 ubiquitin-protein ligase MEX3C (Mex3c) of Mus musculus (Mouse).